Consider the following 309-residue polypeptide: Homoserine kinase (309 aa).

91–101 (PIGSGLGSSAC) serves as a coordination point for ATP.

Belongs to the GHMP kinase family. Homoserine kinase subfamily.

It is found in the cytoplasm. The catalysed reaction is L-homoserine + ATP = O-phospho-L-homoserine + ADP + H(+). The protein operates within amino-acid biosynthesis; L-threonine biosynthesis; L-threonine from L-aspartate: step 4/5. Functionally, catalyzes the ATP-dependent phosphorylation of L-homoserine to L-homoserine phosphate. The sequence is that of Homoserine kinase from Salmonella arizonae (strain ATCC BAA-731 / CDC346-86 / RSK2980).